We begin with the raw amino-acid sequence, 534 residues long: Membrane-bound lytic murein transglycosylase F (534 aa).

A signal peptide spans 1–24 (MQISQFNRLKRSALLFASVLLLSA). A non-LT domain region spans residues 25-285 (CQIESEPKSE…TLEEKYIGHI (261 aa)). The tract at residues 287–534 (AFDYVDTRAF…AEQTPVPKAE (248 aa)) is LT domain. Residue glutamate 330 is part of the active site. Residues 507–534 (VSGAVEVTPPPEENAPQEAEQTPVPKAE) form a disordered region. A compositionally biased stretch (low complexity) spans 520 to 534 (NAPQEAEQTPVPKAE).

In the N-terminal section; belongs to the bacterial solute-binding protein 3 family. This sequence in the C-terminal section; belongs to the transglycosylase Slt family.

The protein localises to the cell outer membrane. The catalysed reaction is Exolytic cleavage of the (1-&gt;4)-beta-glycosidic linkage between N-acetylmuramic acid (MurNAc) and N-acetylglucosamine (GlcNAc) residues in peptidoglycan, from either the reducing or the non-reducing ends of the peptidoglycan chains, with concomitant formation of a 1,6-anhydrobond in the MurNAc residue.. In terms of biological role, murein-degrading enzyme that degrades murein glycan strands and insoluble, high-molecular weight murein sacculi, with the concomitant formation of a 1,6-anhydromuramoyl product. Lytic transglycosylases (LTs) play an integral role in the metabolism of the peptidoglycan (PG) sacculus. Their lytic action creates space within the PG sacculus to allow for its expansion as well as for the insertion of various structures such as secretion systems and flagella. This is Membrane-bound lytic murein transglycosylase F from Vibrio campbellii (strain ATCC BAA-1116).